The chain runs to 515 residues: 1-pyrroline-5-carboxylate dehydrogenase (515 aa).

Residues glutamate 286 and cysteine 320 contribute to the active site.

The protein belongs to the aldehyde dehydrogenase family. RocA subfamily.

It catalyses the reaction L-glutamate 5-semialdehyde + NAD(+) + H2O = L-glutamate + NADH + 2 H(+). The protein operates within amino-acid degradation; L-proline degradation into L-glutamate; L-glutamate from L-proline: step 2/2. The polypeptide is 1-pyrroline-5-carboxylate dehydrogenase (Geobacillus kaustophilus (strain HTA426)).